The sequence spans 4226 residues: Guanylate cyclase alpha (4226 aa).

Over 1-104 (MSDSKKHYNE…SFIFKGLYEQ (104 aa)) the chain is Cytoplasmic. Residues 105–125 (FLRLPNIWFLLISLLEFIPQY) form a helical membrane-spanning segment. At 126-131 (QNLSNY) the chain is on the extracellular side. N-linked (GlcNAc...) asparagine glycosylation is present at N127. A helical membrane pass occupies residues 132–152 (MYYSKHSSFFLLLFFICVSII). Over 153-337 (KNIYEDSRRS…LGYVNKELNS (185 aa)) the chain is Cytoplasmic. Residues 338–358 (YTIIGLIFTFICVFISVLFKW) traverse the membrane as a helical segment. Residues 359-392 (TEDDKFRNGSHFFLITVKDNICESIVKYTLLYSN) are Extracellular-facing. N-linked (GlcNAc...) asparagine glycosylation occurs at N366. Residues 393 to 413 (IIPISILISVDLISILQSILI) traverse the membrane as a helical segment. Topologically, residues 414–2083 (ENDNHISTFE…FIYGSKHLYT (1670 aa)) are cytoplasmic. Disordered stretches follow at residues 552–572 (EHSQ…NNIC), 832–904 (SSKN…SNND), 968–989 (INNN…KSSS), and 1740–1765 (NINK…NNSN). Residues 558–570 (DNNNNNDNNNNNN) are compositionally biased toward low complexity. Positions 838-847 (TLDDPTELIS) are enriched in acidic residues. The segment covering 854 to 873 (LRDKYEHTSDKKNDTNKNRD) has biased composition (basic and acidic residues). Residues 874 to 904 (GANNSNNNNNKDVSNNKNKNNNNYNYNSNND) are compositionally biased toward low complexity. Positions 1745–1754 (YKYDKNDKHN) are enriched in basic and acidic residues. The span at 1755 to 1765 (NNNNNNNNNSN) shows a compositional bias: low complexity. Residues 2084–2104 (ISIILYWNFFKNILLILPIFF) form a helical membrane-spanning segment. Over 2105 to 2119 (YQAYASWSCVKIYPE) the chain is Extracellular. The helical transmembrane segment at 2120–2140 (LLYTFFSIFWVFIPIIYYMFL) threads the bilayer. Residues 2141–2169 (QHNLNYDILYNIPLFYALSRRRYNMNCFK) lie on the Cytoplasmic side of the membrane. The helical transmembrane segment at 2170 to 2190 (FLPWIFEAIFYSMIIYFFAYA) threads the bilayer. The Extracellular portion of the chain corresponds to 2191-2202 (ALKENSHLNNGE). A helical transmembrane segment spans residues 2203-2223 (VITINTFGNICFIGCLLISIL). At 2224-2235 (RLFLEGSLWSPS) the chain is on the cytoplasmic side. A helical membrane pass occupies residues 2236–2256 (ILITCFGCFLFVFFPSLLFIC). Over 2257–2275 (FAYLSNEYIREVFRQTFLW) the chain is Extracellular. The chain crosses the membrane as a helical span at residues 2276 to 2296 (APLYVLLILWFSTCIISYIFI). Residues 2297–2787 (NFTKSILFPN…QIHKKNKFYK (491 aa)) lie on the Cytoplasmic side of the membrane. Positions 2477 to 2505 (NNDNNNDDNDNDNNNNNNNNDNYNNNDHN) are disordered. A compositionally biased stretch (low complexity) spans 2488–2502 (DNNNNNNNNDNYNNN). A helical membrane pass occupies residues 2788–2808 (TFTPWYRFIFLLLGVFFLYVW). The Extracellular segment spans residues 2809-2828 (KLESSLSQLWNMPSDASTDV). Residues 2829–2849 (FILFLSLLLELVLLAATVTTF) traverse the membrane as a helical segment. Topologically, residues 2850–2860 (FSNIFIENFNK) are cytoplasmic. Residues 2861–2881 (IISAVVILIITYHVVSYSVTH) form a helical membrane-spanning segment. Topologically, residues 2882–2900 (IDGVFQAVLFPLYTFVILR) are extracellular. The chain crosses the membrane as a helical span at residues 2901–2921 (LPFVNAVLCNIIFLGLFIIRF). Topologically, residues 2922 to 2930 (NGDHFLDKK) are cytoplasmic. The helical transmembrane segment at 2931 to 2951 (GLAHYIPLFIGVDVFVGFVGY) threads the bilayer. Residues 2952-3008 (RLEYNQRKNFLLEYSVESSRRKQREILNTMLPPFVVDEMIYSELNEEGIPISLKAED) lie on the Extracellular side of the membrane. Residues 3009-3029 (ISTVTIIFCDIYDFQNIVASI) traverse the membrane as a helical segment. In terms of domain architecture, Guanylate cyclase 1 spans 3013–3270 (TIIFCDIYDF…DTVNTASRMK (258 aa)). At 3030 to 3738 (EPTRLVEVLD…SNINSIEQAL (709 aa)) the chain is on the cytoplasmic side. Disordered stretches follow at residues 3077–3150 (EDEL…FEED) and 3201–3230 (DAND…NNKP). 2 stretches are compositionally biased toward low complexity: residues 3083-3098 (NKYS…NYYY) and 3108-3138 (NNNN…NNVN). The span at 3140–3150 (SDDDGDFFEED) shows a compositional bias: acidic residues. Over residues 3201 to 3220 (DANDDTHNVNDSFNNDKAEN) the composition is skewed to basic and acidic residues. A helical membrane pass occupies residues 3739 to 3759 (IIFLVTFVMQTLISSTVSIVF). Residues 3760 to 3773 (IDHKRATQTLHINY) are Extracellular-facing. Residues 3774–3794 (FAYWSVRSVYTFFGFVLWLLF) form a helical membrane-spanning segment. Over 3795-3811 (HYRTRPEVSSLLNIKWM) the chain is Cytoplasmic. The helical transmembrane segment at 3812-3832 (IFFLNLLFISAACVFSIAYLW) threads the bilayer. Over 3833-3840 (AISETDQT) the chain is Extracellular. A helical membrane pass occupies residues 3841–3861 (TSYTIWMTNDTIEFFFYLVIL). Residues 3862–3871 (HHNTGMLFQT) are Cytoplasmic-facing. A helical membrane pass occupies residues 3872-3892 (CILVDLLFITMSLTFIATSVV). Residue K3893 is a topological domain, extracellular. Residues 3894–3914 (TITTDSTVLLIPWYVAFNLIS) form a helical membrane-spanning segment. Topologically, residues 3915-4226 (TYCKESIDRR…INVNDRQSNL (312 aa)) are cytoplasmic. The 135-residue stretch at 3970 to 4104 (TFLFADICGF…IDVLTGNLME (135 aa)) folds into the Guanylate cyclase 2 domain. Residues D3975, I3976, and D4019 each coordinate Mg(2+).

This sequence in the N-terminal section; belongs to the cation transport ATPase (P-type) (TC 3.A.3) family. Type IV subfamily. In the C-terminal section; belongs to the adenylyl cyclase class-4/guanylyl cyclase family. The cofactor is Mg(2+). Mn(2+) is required as a cofactor.

It localises to the cell membrane. Its subcellular location is the cytoplasmic vesicle membrane. The catalysed reaction is GTP = 3',5'-cyclic GMP + diphosphate. Functionally, catalyzes the synthesis of the second messenger cGMP from GTP. In asexual blood stage schizonts, required for cGMP production which is essential for PKG activation, PKG-dependent Ca(2+) release, and ultimately merozoite egress from host erythrocytes. The protein is Guanylate cyclase alpha of Plasmodium falciparum (isolate 3D7).